A 297-amino-acid chain; its full sequence is Glycerol-3-phosphate dehydrogenase [NAD(P)+] (297 aa).

Residues tryptophan 11, arginine 33, and lysine 79 each coordinate NADPH. 3 residues coordinate sn-glycerol 3-phosphate: lysine 79, glycine 107, and serine 109. Residue alanine 111 coordinates NADPH. Lysine 161, aspartate 214, serine 224, arginine 225, and asparagine 226 together coordinate sn-glycerol 3-phosphate. The Proton acceptor role is filled by lysine 161. Residue arginine 225 coordinates NADPH. 2 residues coordinate NADPH: valine 249 and glutamate 251.

Belongs to the NAD-dependent glycerol-3-phosphate dehydrogenase family.

It localises to the cytoplasm. The enzyme catalyses sn-glycerol 3-phosphate + NAD(+) = dihydroxyacetone phosphate + NADH + H(+). It carries out the reaction sn-glycerol 3-phosphate + NADP(+) = dihydroxyacetone phosphate + NADPH + H(+). Its pathway is membrane lipid metabolism; glycerophospholipid metabolism. Functionally, catalyzes the reduction of the glycolytic intermediate dihydroxyacetone phosphate (DHAP) to sn-glycerol 3-phosphate (G3P), the key precursor for phospholipid synthesis. This is Glycerol-3-phosphate dehydrogenase [NAD(P)+] from Campylobacter jejuni subsp. jejuni serotype O:6 (strain 81116 / NCTC 11828).